The primary structure comprises 214 residues: Pyridoxine/pyridoxamine 5'-phosphate oxidase (214 aa).

Substrate is bound by residues 9 to 12 and Lys67; that span reads RKSY. FMN-binding positions include 62-67, 77-78, Arg83, Lys84, and Gln106; these read RIVLLK and YT. Substrate is bound by residues Tyr124, Arg128, and Ser132. FMN contacts are provided by residues 141-142 and Trp186; that span reads QS. A substrate-binding site is contributed by 192-194; sequence RLH. Arg196 serves as a coordination point for FMN.

The protein belongs to the pyridoxamine 5'-phosphate oxidase family. As to quaternary structure, homodimer. Requires FMN as cofactor.

The enzyme catalyses pyridoxamine 5'-phosphate + O2 + H2O = pyridoxal 5'-phosphate + H2O2 + NH4(+). The catalysed reaction is pyridoxine 5'-phosphate + O2 = pyridoxal 5'-phosphate + H2O2. It functions in the pathway cofactor metabolism; pyridoxal 5'-phosphate salvage; pyridoxal 5'-phosphate from pyridoxamine 5'-phosphate: step 1/1. The protein operates within cofactor metabolism; pyridoxal 5'-phosphate salvage; pyridoxal 5'-phosphate from pyridoxine 5'-phosphate: step 1/1. Functionally, catalyzes the oxidation of either pyridoxine 5'-phosphate (PNP) or pyridoxamine 5'-phosphate (PMP) into pyridoxal 5'-phosphate (PLP). The protein is Pyridoxine/pyridoxamine 5'-phosphate oxidase of Leptospira interrogans serogroup Icterohaemorrhagiae serovar copenhageni (strain Fiocruz L1-130).